Here is a 24-residue protein sequence, read N- to C-terminus: Ascaphin-6 (24 aa).

In terms of tissue distribution, expressed by the skin glands.

Its subcellular location is the secreted. Functionally, antimicrobial peptide that shows higher potency against Gram-negative bacteria than against Gram-positive bacteria. Has a very week hemolytic activity. This is Ascaphin-6 from Ascaphus truei (Coastal tailed frog).